Consider the following 245-residue polypeptide: S-methyl-5'-thioinosine phosphorylase (245 aa).

Phosphate-binding positions include Thr10 and 52 to 53 (RH). A substrate-binding site is contributed by Met185. Residue Thr186 participates in phosphate binding. Residue 209–211 (NPA) participates in substrate binding.

Belongs to the PNP/MTAP phosphorylase family. MTAP subfamily. Homotrimer.

The enzyme catalyses S-methyl-5'-thioinosine + phosphate = 5-(methylsulfanyl)-alpha-D-ribose 1-phosphate + hypoxanthine. It functions in the pathway purine metabolism; purine nucleoside salvage. Its function is as follows. Catalyzes the reversible phosphorylation of S-methyl-5'-thioinosine (MTI) to hypoxanthine and 5-methylthioribose-1-phosphate. Involved in the breakdown of S-methyl-5'-thioadenosine (MTA), a major by-product of polyamine biosynthesis. Catabolism of (MTA) occurs via deamination to MTI and phosphorolysis to hypoxanthine. Involved in quorum sensing. The polypeptide is S-methyl-5'-thioinosine phosphorylase (Pseudomonas aeruginosa (strain ATCC 15692 / DSM 22644 / CIP 104116 / JCM 14847 / LMG 12228 / 1C / PRS 101 / PAO1)).